The chain runs to 243 residues: Ubiquinone/menaquinone biosynthesis C-methyltransferase UbiE (243 aa).

Residues Thr69, Asp90, and 116–117 (DA) each bind S-adenosyl-L-methionine.

This sequence belongs to the class I-like SAM-binding methyltransferase superfamily. MenG/UbiE family.

It catalyses the reaction a 2-demethylmenaquinol + S-adenosyl-L-methionine = a menaquinol + S-adenosyl-L-homocysteine + H(+). It carries out the reaction a 2-methoxy-6-(all-trans-polyprenyl)benzene-1,4-diol + S-adenosyl-L-methionine = a 5-methoxy-2-methyl-3-(all-trans-polyprenyl)benzene-1,4-diol + S-adenosyl-L-homocysteine + H(+). It functions in the pathway quinol/quinone metabolism; menaquinone biosynthesis; menaquinol from 1,4-dihydroxy-2-naphthoate: step 2/2. Its pathway is cofactor biosynthesis; ubiquinone biosynthesis. Methyltransferase required for the conversion of demethylmenaquinol (DMKH2) to menaquinol (MKH2) and the conversion of 2-polyprenyl-6-methoxy-1,4-benzoquinol (DDMQH2) to 2-polyprenyl-3-methyl-6-methoxy-1,4-benzoquinol (DMQH2). This is Ubiquinone/menaquinone biosynthesis C-methyltransferase UbiE from Ralstonia nicotianae (strain ATCC BAA-1114 / GMI1000) (Ralstonia solanacearum).